The sequence spans 151 residues: Large-conductance mechanosensitive channel (151 aa).

2 helical membrane passes run 14 to 34 (VVDM…VNSL) and 85 to 105 (GLFV…FLLV).

It belongs to the MscL family. As to quaternary structure, homopentamer.

Its subcellular location is the cell inner membrane. Functionally, channel that opens in response to stretch forces in the membrane lipid bilayer. May participate in the regulation of osmotic pressure changes within the cell. This chain is Large-conductance mechanosensitive channel, found in Chlorobaculum tepidum (strain ATCC 49652 / DSM 12025 / NBRC 103806 / TLS) (Chlorobium tepidum).